The sequence spans 544 residues: Zinc finger protein 502 (544 aa).

Lys43 is covalently cross-linked (Glycyl lysine isopeptide (Lys-Gly) (interchain with G-Cter in SUMO2)). C2H2-type zinc fingers lie at residues 155–177 (WKCN…QRTH), 183–205 (YTCE…QRIH), 211–233 (YGCE…QRIH), 239–261 (YKCN…QRIH), 267–289 (YKCN…QRIH), 295–317 (YICS…QRIH), 323–345 (HKCD…QRIH), 351–373 (YKCK…QRIH), 379–401 (YKCK…QRIH), 407–429 (YKCS…QRSH), 435–457 (YKCN…MRIH), 463–485 (YKCK…HRTH), 491–513 (YKCS…YRIH), and 519–541 (YECI…QKLH).

Belongs to the krueppel C2H2-type zinc-finger protein family. (Microbial infection) Interacts with human respiratory syncytial virus (HRSV) matrix protein; this interaction probably facilitates viral release.

Its subcellular location is the nucleus. Functionally, may be involved in transcriptional regulation. In Homo sapiens (Human), this protein is Zinc finger protein 502 (ZNF502).